A 351-amino-acid chain; its full sequence is Histidinol-phosphate aminotransferase (351 aa).

Position 213 is an N6-(pyridoxal phosphate)lysine (Lys213).

It belongs to the class-II pyridoxal-phosphate-dependent aminotransferase family. Histidinol-phosphate aminotransferase subfamily. In terms of assembly, homodimer. Requires pyridoxal 5'-phosphate as cofactor.

It carries out the reaction L-histidinol phosphate + 2-oxoglutarate = 3-(imidazol-4-yl)-2-oxopropyl phosphate + L-glutamate. It functions in the pathway amino-acid biosynthesis; L-histidine biosynthesis; L-histidine from 5-phospho-alpha-D-ribose 1-diphosphate: step 7/9. The polypeptide is Histidinol-phosphate aminotransferase (Thermoanaerobacter sp. (strain X514)).